The sequence spans 274 residues: Undecaprenyl-diphosphatase (274 aa).

A run of 8 helical transmembrane segments spans residues 4–24 (LLVI…LLPI), 46–66 (VVFE…EYRV), 86–106 (INVA…SDFI), 109–129 (VLFS…IIMW), 145–165 (ISYA…IPGT), 188–208 (FSFF…LWEA), 214–234 (IEDM…TFAV), and 250–270 (FAWY…TGVI).

Belongs to the UppP family.

It is found in the cell inner membrane. It catalyses the reaction di-trans,octa-cis-undecaprenyl diphosphate + H2O = di-trans,octa-cis-undecaprenyl phosphate + phosphate + H(+). Its function is as follows. Catalyzes the dephosphorylation of undecaprenyl diphosphate (UPP). Confers resistance to bacitracin. This Cellvibrio japonicus (strain Ueda107) (Pseudomonas fluorescens subsp. cellulosa) protein is Undecaprenyl-diphosphatase.